Reading from the N-terminus, the 374-residue chain is MKFLTALSAIGALVATATAAAVPNTPAKQSMIDVQLSATGNTMIKATITNKGDKALNLLQFNTILDKNPTRKVRVYQNGTEVKFTGMLPRYKMSNLSPEYFTSLGPKASVESTFDIARTHDLTRGGKITVMASGTIRTAEGHGANATTITGYARYESNKLELDVDAKKASSVGQAMGKVKKSRGTIDKRTNIDTSSCTQGQLDALEGALYNSAALAQAAAEAAPSNLNTVAEFFKSTSSSTVNTIVSRLQSVASESSYVDYGSTTYYCTDSMNGCSPGVLAYTLPDQNLIFNCPIYYSDLPALAQSCYEQDQATTTLHEMTHNSAVVSPFCDDLGYGYEDATSLSAAQAIQNADSYALFANGKLILHLHEKSGF.

The first 19 residues, 1–19 (MKFLTALSAIGALVATATA), serve as a signal peptide directing secretion. A propeptide spanning residues 20–189 (AAVPNTPAKQ…KKSRGTIDKR (170 aa)) is cleaved from the precursor. 2 disulfide bridges follow: cysteine 197–cysteine 268 and cysteine 275–cysteine 293. Histidine 318 contacts Zn(2+). Glutamate 319 is a catalytic residue. Residues histidine 322 and aspartate 333 each contribute to the Zn(2+) site.

This sequence belongs to the peptidase M35 family. Requires Zn(2+) as cofactor.

The protein resides in the secreted. It catalyses the reaction Preferential cleavage of bonds with hydrophobic residues in P1'. Also 3-Asn-|-Gln-4 and 8-Gly-|-Ser-9 bonds in insulin B chain.. Its function is as follows. Probable secreted metalloprotease that shows high activities on basic nuclear substrates such as histone and protamine. May be involved in virulence. This chain is Probable neutral protease 2 homolog ARB_00849, found in Arthroderma benhamiae (strain ATCC MYA-4681 / CBS 112371) (Trichophyton mentagrophytes).